The following is a 224-amino-acid chain: Heme response regulator HssR (224 aa).

Residues 3-116 (QCLVVDDDSR…ELIFRIRAVL (114 aa)) enclose the Response regulatory domain. The residue at position 52 (Asp52) is a 4-aspartylphosphate. The ompR/PhoB-type DNA-binding region spans 124-222 (NSEMTIGNLT…VRGQGYKVEN (99 aa)).

In terms of processing, phosphorylated by HssS.

Its subcellular location is the cytoplasm. Functionally, member of the two-component regulatory system HssS/HssR involved in intracellular heme homeostasis and tempering of staphylococcal virulence. Phosphorylated HssR binds to a direct repeat sequence within hrtAB promoter and activates the expression of hrtAB, an efflux pump, in response to extracellular heme, hemin, hemoglobin or blood. The protein is Heme response regulator HssR (hssR) of Staphylococcus aureus (strain bovine RF122 / ET3-1).